A 212-amino-acid polypeptide reads, in one-letter code: Probable GTP-binding protein EngB (212 aa).

Positions 40-212 (SLPEIAFVGK…KASLAKCIKA (173 aa)) constitute an EngB-type G domain. GTP is bound by residues 48 to 55 (GKSNVGKS), 75 to 79 (GRTRQ), 93 to 96 (DLPG), 160 to 163 (TKSD), and 191 to 193 (VSS). Positions 55 and 77 each coordinate Mg(2+).

This sequence belongs to the TRAFAC class TrmE-Era-EngA-EngB-Septin-like GTPase superfamily. EngB GTPase family. The cofactor is Mg(2+).

Necessary for normal cell division and for the maintenance of normal septation. The polypeptide is Probable GTP-binding protein EngB (Rickettsia akari (strain Hartford)).